The chain runs to 346 residues: Serpentine receptor class gamma-20 (346 aa).

A run of 7 helical transmembrane segments spans residues 27-47, 69-89, 106-128, 157-177, 212-232, 254-274, and 279-299; these read VMLS…SAVL, FFVL…IEVL, PFFF…CLAF, ILAP…WNIL, IPCL…LTML, TMLF…LPGI, and LLIS…ALIL.

The protein belongs to the nematode receptor-like protein srg family.

It localises to the membrane. This is Serpentine receptor class gamma-20 (srg-20) from Caenorhabditis elegans.